The following is a 304-amino-acid chain: Quinolinate synthase (304 aa).

Residues histidine 24 and serine 41 each coordinate iminosuccinate. Cysteine 86 is a [4Fe-4S] cluster binding site. Iminosuccinate contacts are provided by residues 112-114 and serine 129; that span reads YVN. Cysteine 171 contacts [4Fe-4S] cluster. Residues 197–199 and threonine 214 contribute to the iminosuccinate site; that span reads HPE. Cysteine 259 lines the [4Fe-4S] cluster pocket.

Belongs to the quinolinate synthase family. Type 2 subfamily. The cofactor is [4Fe-4S] cluster.

It localises to the cytoplasm. The enzyme catalyses iminosuccinate + dihydroxyacetone phosphate = quinolinate + phosphate + 2 H2O + H(+). Its pathway is cofactor biosynthesis; NAD(+) biosynthesis; quinolinate from iminoaspartate: step 1/1. In terms of biological role, catalyzes the condensation of iminoaspartate with dihydroxyacetone phosphate to form quinolinate. The sequence is that of Quinolinate synthase from Geobacter metallireducens (strain ATCC 53774 / DSM 7210 / GS-15).